The primary structure comprises 165 residues: Heme oxygenase (165 aa).

It belongs to the heme oxygenase family.

The catalysed reaction is heme b + 3 reduced [NADPH--hemoprotein reductase] + 3 O2 = biliverdin IXalpha + CO + Fe(2+) + 3 oxidized [NADPH--hemoprotein reductase] + 3 H2O + H(+). Its function is as follows. Catalyzes the opening of the heme ring to form the open-chain tetrapyrrole biliverdin IX with the release of iron and carbon monoxide (CO). This chain is Heme oxygenase (bphO), found in Xanthomonas campestris pv. campestris (strain 8004).